A 177-amino-acid polypeptide reads, in one-letter code: Transmembrane protein 275 (177 aa).

A disordered region spans residues methionine 1 to arginine 20. Transmembrane regions (helical) follow at residues glycine 36 to leucine 56 and leucine 63 to cysteine 83. Positions glutamate 113 to serine 177 are disordered. Residues serine 128–proline 161 show a composition bias toward low complexity.

Its subcellular location is the membrane. This chain is Transmembrane protein 275, found in Mus musculus (Mouse).